The chain runs to 279 residues: Putative pyruvate, phosphate dikinase regulatory protein (279 aa).

153–160 lines the ADP pocket; it reads GISRTSKT.

This sequence belongs to the pyruvate, phosphate/water dikinase regulatory protein family. PDRP subfamily.

The catalysed reaction is N(tele)-phospho-L-histidyl/L-threonyl-[pyruvate, phosphate dikinase] + ADP = N(tele)-phospho-L-histidyl/O-phospho-L-threonyl-[pyruvate, phosphate dikinase] + AMP + H(+). It catalyses the reaction N(tele)-phospho-L-histidyl/O-phospho-L-threonyl-[pyruvate, phosphate dikinase] + phosphate + H(+) = N(tele)-phospho-L-histidyl/L-threonyl-[pyruvate, phosphate dikinase] + diphosphate. Bifunctional serine/threonine kinase and phosphorylase involved in the regulation of the pyruvate, phosphate dikinase (PPDK) by catalyzing its phosphorylation/dephosphorylation. This chain is Putative pyruvate, phosphate dikinase regulatory protein, found in Brucella abortus (strain 2308).